Here is a 737-residue protein sequence, read N- to C-terminus: Catalase-peroxidase (737 aa).

The interval 1–33 is disordered; that stretch reads MPEATEHPPIGEAQTEPAQSGCPMVIKPPVEGG. Positions 107-235 form a cross-link, tryptophyl-tyrosyl-methioninium (Trp-Tyr) (with M-261); it reads WHAAGTYRVQ…LGASHMGLIY (129 aa). The active-site Proton acceptor is the histidine 108. A cross-link (tryptophyl-tyrosyl-methioninium (Tyr-Met) (with W-107)) is located at residues 235 to 261; it reads YVNPEGPEGNPDPIAAAIDIRETFGRM. Histidine 276 provides a ligand contact to heme.

The protein belongs to the peroxidase family. Peroxidase/catalase subfamily. In terms of assembly, homodimer or homotetramer. Requires heme b as cofactor. In terms of processing, formation of the three residue Trp-Tyr-Met cross-link is important for the catalase, but not the peroxidase activity of the enzyme.

It catalyses the reaction H2O2 + AH2 = A + 2 H2O. It carries out the reaction 2 H2O2 = O2 + 2 H2O. In terms of biological role, bifunctional enzyme with both catalase and broad-spectrum peroxidase activity. May play a role in polycyclic aromatic hydrocarbon (PAH) metabolism. This is Catalase-peroxidase from Mycolicibacterium vanbaalenii (Mycobacterium vanbaalenii).